Consider the following 253-residue polypeptide: TasA anchoring/assembly protein (253 aa).

A signal peptide spans 1–32 (MFRLFHNQQKAKTKLKVLLIFQLSVIFSLTAA). The interval 50 to 57 (TFDVSLQT) is important for TasA fiber formation. The segment covering 190–241 (EKPTVPKKETKSDVKKENETTQKDIPEKTMKEETSQEAVTKEKETQSDQKES) has biased composition (basic and acidic residues). The tract at residues 190–253 (EKPTVPKKET…EDEKSNEADQ (64 aa)) is disordered.

The protein resides in the secreted. The protein localises to the cell wall. In terms of biological role, required for biofilm formation. Required for the proper anchoring and polymerization of TasA amyloid fibers at the cell surface. Is also a minor component of TasA fibers. The protein is TasA anchoring/assembly protein of Bacillus subtilis (strain 168).